Consider the following 236-residue polypeptide: MTKRYWNIDLEEMMRAGVHFGHGTRKWNPRMAPYISAKRKGIHIINLTRTARFLSEACDLVFDAASRGKQFLIVGTKNKAADLVSRAAIRARCHYVNKKWLGGMLTNWSTTEKRLHKFRDLRTEQKTEGFNRLPKRDAAVLKRQLSRLETYLGGIKYMTGLPDIVIILDQQEEYTALRECITLGIPTISLIDTNCNPDLADISIPANDDAIASIRFILNKLVFAICEGRSSYIQNS.

The protein belongs to the universal ribosomal protein uS2 family.

The protein localises to the plastid. The protein resides in the chloroplast. This is Small ribosomal subunit protein uS2c (rps2) from Olimarabidopsis pumila (Dwarf rocket).